The chain runs to 1023 residues: MDEMSCGGGGGGARWKRARVAGMGEGKAGGGGGAAFLGLERVGMVVRMLPVPEKVSARARVVRGSLVAHFRGWRVVRETWWWVLLLWILAGSLGSFYLFLFMNAQSLDKRRDSLASMCDERARMLQDQFNVSMNHLQALAILVSTFHHSKTPSAIDQMTFARYAERTAFERPLTSGVAYAVRVTHGEREQFERQQGWAIKKMYSSSNKKQSSPGPGPGDAAVAEIREPAEEYAPVIFAQDAYKHVISFDMLSGNEDRDNILRARKSGKGVLTAPFKLLNNRLGVILTYTVYKYELPAYARPHERIQAAIGYLGGIFDIQALVEKLLKQLASQESIMVNVYDTTNESPISMYGDDTGSGMCHVSVLNFGDPSRKHEMHCRFEKKPPWPWLAITSSFGTLVIALLTGHIFQATVHRIAKVEDDFHKMSELKKRAEDADVAKSQFLATVSHEIRTPMNGVLGMLQMLMDTDLDTTQQDYVRTAQASGKALVSLINEVLDQAKIESGKLELETVPFDLRTVCDDILSLFCGKAQEKGLELAVYVSDQVPQILIGDPGRIRQIITNLVGNSIKFTERGHIYLTVHVVEEVMSCLEVETGIQNTNTLSGYPVANRRRSWESIRLFNRELHSSEKSFAPIASDSISLVISVEDTGVGIPFEAQSRVFTPFMQVGPSIARIHGGTGIGLSISKCLVGLMKGEIGFASKPHVGSTFTFTAVLMRAHCKGNDIKSSEFKGINALVVDHRPVRAKVTKYHLQRLGVKTELTAELNQFISKLNSGSLTAKLVLIDKETWLKESHCTPLLVNKLRNNDKPDSPKLFLLGSSASSPKGGSDTSREHNLNVIMKPLRASMLQVSLRRALGGVDKVHCRNGVVGNSTLGSLLHKKQIIVVDDNIVNLKVAAGALKKYGAEVTCADSGKKAITLLKPPHNFDACFMDIQMPEMDGFEATRRIRVMERDLNERIERGEAPPECASIQRWRTPILAMTADVIQATHEECLKSEMDGYVSKPFEGEQLYSEVARFFQNHDQVE.

The Cytoplasmic segment spans residues Met-1–Trp-80. The helical transmembrane segment at Trp-81 to Phe-101 threads the bilayer. Topologically, residues Met-102 to Pro-387 are extracellular. In terms of domain architecture, CHASE spans Thr-151–Gly-352. The chain crosses the membrane as a helical span at residues Trp-388–Phe-408. Residues Gln-409–Glu-1023 lie on the Cytoplasmic side of the membrane. Residues Thr-445–Arg-715 enclose the Histidine kinase domain. His-448 bears the Phosphohistidine; by autocatalysis mark. Response regulatory domains are found at residues Asn-732 to Leu-854 and Gln-880 to Phe-1016. The residue at position 783 (Asp-783) is a 4-aspartylphosphate. The interval Leu-812–Glu-831 is disordered. Polar residues predominate over residues Ser-817–Asp-827. Asp-930 bears the 4-aspartylphosphate mark.

Post-translationally, activation probably requires a transfer of a phosphate group between a His in the transmitter domain and an Asp of the receiver domain.

The protein resides in the cell membrane. The enzyme catalyses ATP + protein L-histidine = ADP + protein N-phospho-L-histidine.. Its function is as follows. Cytokinin receptor related to bacterial two-component regulators. Functions as a histidine kinase and transmits the stress signal to a downstream MAPK cascade. The polypeptide is Probable histidine kinase 3 (Oryza sativa subsp. indica (Rice)).